The primary structure comprises 146 residues: MTSSKKSSDNSSSSNDLYAIAETSGQQFWFEVDRYYDIDRLNAKEKDKITIDKILLIKDKENVSIGKPYIKNAKIELEVVSHKRDKKIIVYKMRPKKKTRRKMGHRQELTRVMVKSISISKSTPKSSPKTEATKKSTSSKASKPEN.

Positions 95–104 (PKKKTRRKMG) are enriched in basic residues. The tract at residues 95–146 (PKKKTRRKMGHRQELTRVMVKSISISKSTPKSSPKTEATKKSTSSKASKPEN) is disordered. Over residues 115-146 (KSISISKSTPKSSPKTEATKKSTSSKASKPEN) the composition is skewed to low complexity.

This sequence belongs to the bacterial ribosomal protein bL21 family. In terms of assembly, part of the 50S ribosomal subunit. Contacts protein L20.

Its function is as follows. This protein binds to 23S rRNA in the presence of protein L20. This Prochlorococcus marinus (strain MIT 9515) protein is Large ribosomal subunit protein bL21.